Reading from the N-terminus, the 397-residue chain is Elongation factor Tu (397 aa).

A tr-type G domain is found at Lys-10 to Glu-207. The G1 stretch occupies residues Gly-19 to Thr-26. A GTP-binding site is contributed by Gly-19–Thr-26. Thr-26 lines the Mg(2+) pocket. Positions Gly-60 to Asn-64 are G2. The segment at Asp-81–Gly-84 is G3. Residues Asp-81–His-85 and Asn-136–Asp-139 contribute to the GTP site. Residues Asn-136 to Asp-139 are G4. The interval Ser-174–Leu-176 is G5.

It belongs to the TRAFAC class translation factor GTPase superfamily. Classic translation factor GTPase family. EF-Tu/EF-1A subfamily. As to quaternary structure, monomer.

The protein localises to the cytoplasm. It catalyses the reaction GTP + H2O = GDP + phosphate + H(+). GTP hydrolase that promotes the GTP-dependent binding of aminoacyl-tRNA to the A-site of ribosomes during protein biosynthesis. The polypeptide is Elongation factor Tu (Syntrophus aciditrophicus (strain SB)).